The chain runs to 432 residues: MPVLNLRSDFAEADALPEQMGAIGRRARAAARRMALASARTKDAALKLIAERIRASRDEILSENARDVAAARCAGQTAALIDRLTLDPGRLAAIADAVEKVGSLADPVGRQLAAIERPNGLLIERIAVPLGVVGVIFEARPNVTADAGALCLKAGNAAILRAGSDSHRSAMAIARAMSRGLADAGLPEDAIQLVPTRDRAAVGLMLAGLDGCVDVIVPRGGRGLVERVQAEARVPVFAHLDGINHVYVAAAADLDMARTVLLNSKMRRTSVCGAAETLLVDRACAATHLAPLVQALLDAGCAVRGDAATRAVDPRVTAASEEDWHTEYLDAIIAVRVVDGIEAAIEHIETYGSHHTDAIITENDAEATRFLAEVDSAIVTHNASTQFADGGEFGFGAEIGIATGRMHARGPVGVEQLTTFKYRVHGTGQIRP.

It belongs to the gamma-glutamyl phosphate reductase family.

The protein localises to the cytoplasm. The catalysed reaction is L-glutamate 5-semialdehyde + phosphate + NADP(+) = L-glutamyl 5-phosphate + NADPH + H(+). It functions in the pathway amino-acid biosynthesis; L-proline biosynthesis; L-glutamate 5-semialdehyde from L-glutamate: step 2/2. Its function is as follows. Catalyzes the NADPH-dependent reduction of L-glutamate 5-phosphate into L-glutamate 5-semialdehyde and phosphate. The product spontaneously undergoes cyclization to form 1-pyrroline-5-carboxylate. This is Gamma-glutamyl phosphate reductase from Methylobacterium radiotolerans (strain ATCC 27329 / DSM 1819 / JCM 2831 / NBRC 15690 / NCIMB 10815 / 0-1).